Consider the following 875-residue polypeptide: Receptor-like protein 33 (875 aa).

The N-terminal stretch at 1-23 is a signal peptide; the sequence is MSLIPITFYFLFLFFSNFRGVFA. Residues 24-822 lie on the Extracellular side of the membrane; it reads VPNIHLCHFE…GESETLESEQ (799 aa). Residues N65, N103, N133, N146, and N181 are each glycosylated (N-linked (GlcNAc...) asparagine). 10 LRR repeats span residues 110–133, 134–157, 159–182, 183–205, 206–230, 231–254, 256–278, 280–302, 303–327, and 329–351; these read FHFLTTLDLSYNHLSGQISSSIGN, LSHLTTLDLSGNNFSGWIPSSLGN, FHLTSLHLYDNNFGGEIPSSLGNL, SYLTFLDLSTNNFVGEIPSSFGS, LNQLSILRLDNNKLSGNLPLEVINL, TKLSEISLSHNQFTGTLPPNITSL, ILESFSASGNNFVGTIPSSLFTI, SITLIFLDNNQLSGTLEFGNISS, PSNLLVLQLGGNNLRGPIPTSISRL, and NLRTLDLSHFNIQGQVDFNIFSH. N-linked (GlcNAc...) asparagine glycans are attached at residues N229 and N250. The N-linked (GlcNAc...) asparagine glycan is linked to N299. One copy of the LRR 11; degenerate repeat lies at 352-377; it reads LKLLGNLYLSHSNTTTTIDLNAVLSC. N-linked (GlcNAc...) asparagine glycans are attached at residues N364, N395, and N411. 15 LRR repeats span residues 378-401, 404-427, 428-451, 455-477, 479-502, 503-528, 530-549, 550-573, 575-596, 597-619, 620-643, 686-710, 711-734, 735-758, and 760-783; these read FKMLISLDLSGNHVLVTNKSSVSD, LGLIGSLNLSGCGITEFPDILRTQ, RQMRTLDISNNKIKGQVPSWLLLQ, MHISNNNFIGFERSTKLEKTVVP, PSMKHFFGSNNNFSGKIPSFICSL, RSLIILDLSNNNFSGAIPPCVGKFKS, LSDLNLRRNRLSGSLPKTII, KSLRSLDVSHNELEGKLPRSLIHF, TLEVLNVESNRINDTFPFWLSS, LKKLQVLVLRSNAFHGRIHKTRF, PKLRIIDISRNHFNGTLPSDCFVE, LKIYTALDFSGNKFEGEIPRSIGLL, KELHILNLSSNGFTGHIPSSMGNL, RELESLDVSRNKLSGEIPQELGNL, and YLAYMNFSHNQLVGQVPGGTQFRT. Residues N490 and N514 are each glycosylated (N-linked (GlcNAc...) asparagine). N587 carries N-linked (GlcNAc...) asparagine glycosylation. A glycan (N-linked (GlcNAc...) asparagine) is linked at N633. 3 N-linked (GlcNAc...) asparagine glycosylation sites follow: N717, N757, and N765. Residues 823–843 form a helical membrane-spanning segment; that stretch reads VLSWIAAAIGFTPGIVLGLTI. Residues 844 to 875 lie on the Cytoplasmic side of the membrane; that stretch reads GHIVLSSKPRWFFKVLYINNSRRRRRTRSEKS.

The protein belongs to the RLP family.

The protein localises to the cell membrane. The sequence is that of Receptor-like protein 33 from Arabidopsis thaliana (Mouse-ear cress).